Consider the following 61-residue polypeptide: Putative antitoxin APE_0472b.1 (61 aa).

The protein belongs to the UPF0165 family.

Its function is as follows. Possibly the antitoxin component of a type II toxin-antitoxin (TA) system. This chain is Putative antitoxin APE_0472b.1, found in Aeropyrum pernix (strain ATCC 700893 / DSM 11879 / JCM 9820 / NBRC 100138 / K1).